Reading from the N-terminus, the 127-residue chain is Cytochrome b-c1 complex subunit 7, mitochondrial (127 aa).

It belongs to the UQCRB/QCR7 family. As to quaternary structure, component of the ubiquinol-cytochrome c oxidoreductase (cytochrome b-c1 complex, complex III, CIII), a multisubunit enzyme composed of 10 subunits. The complex is composed of 3 respiratory subunits cytochrome b (COB), cytochrome c1 (CYT1) and Rieske protein (RIP1), 2 core protein subunits COR1 and QCR2, and 5 low-molecular weight protein subunits QCR6, QCR7, QCR8, QCR9 and QCR10. The complex exists as an obligatory dimer and forms supercomplexes (SCs) in the inner mitochondrial membrane with a monomer or a dimer of cytochrome c oxidase (complex IV, CIV), resulting in 2 different assemblies (supercomplexes III(2)IV and III(2)IV(2)).

It is found in the mitochondrion inner membrane. Component of the ubiquinol-cytochrome c oxidoreductase, a multisubunit transmembrane complex that is part of the mitochondrial electron transport chain which drives oxidative phosphorylation. Plays an important role in the uptake of multiple carbon sources such acetate, lactate, amino acids or GlcNAc present in different host niches. The polypeptide is Cytochrome b-c1 complex subunit 7, mitochondrial (Candida albicans (strain SC5314 / ATCC MYA-2876) (Yeast)).